The sequence spans 428 residues: Enolase (428 aa).

(2R)-2-phosphoglycerate is bound at residue Gln162. Glu204 functions as the Proton donor in the catalytic mechanism. Mg(2+) contacts are provided by Asp241, Glu282, and Asp309. (2R)-2-phosphoglycerate is bound by residues Lys334, Arg363, Ser364, and Lys385. The active-site Proton acceptor is the Lys334.

Belongs to the enolase family. Requires Mg(2+) as cofactor.

Its subcellular location is the cytoplasm. The protein localises to the secreted. It is found in the cell surface. It carries out the reaction (2R)-2-phosphoglycerate = phosphoenolpyruvate + H2O. It participates in carbohydrate degradation; glycolysis; pyruvate from D-glyceraldehyde 3-phosphate: step 4/5. Its function is as follows. Catalyzes the reversible conversion of 2-phosphoglycerate (2-PG) into phosphoenolpyruvate (PEP). It is essential for the degradation of carbohydrates via glycolysis. The polypeptide is Enolase (Mycobacterium ulcerans (strain Agy99)).